A 251-amino-acid polypeptide reads, in one-letter code: tRNA pseudouridine synthase A (251 aa).

Catalysis depends on aspartate 56, which acts as the Nucleophile. Tyrosine 110 serves as a coordination point for substrate.

This sequence belongs to the tRNA pseudouridine synthase TruA family.

The enzyme catalyses uridine(38/39/40) in tRNA = pseudouridine(38/39/40) in tRNA. In terms of biological role, formation of pseudouridine at positions 38, 39 and 40 in the anticodon stem and loop of transfer RNAs. The polypeptide is tRNA pseudouridine synthase A (Picrophilus torridus (strain ATCC 700027 / DSM 9790 / JCM 10055 / NBRC 100828 / KAW 2/3)).